The sequence spans 125 residues: uncharacterized protein (125 aa).

One can recognise an HTH cro/C1-type domain in the interval 19 to 73 (IYSLRLAKGLSRQQLAEVIDVTHQQLQKYEKAINRISVGRLVLIAEALDRNIDYF). The H-T-H motif DNA-binding region spans 30–49 (RQQLAEVIDVTHQQLQKYEK).

This is an uncharacterized protein from Rickettsia conorii (strain ATCC VR-613 / Malish 7).